Consider the following 957-residue polypeptide: GPMGPSGPRGIPGPPGAPGPQGFPGEPGASGPMGPRGPPGPPGKNGDDGEAGKPGRPGERGPSGPQGARGIPGTAGIPGMKGHRGFSGIDGAKGDAGPAGPKGAPGQMGPRGIPGERGRPGAPGPAGARGNDGATGAAGPPGPTGPAGPPGFPGAVGAKGEAGPQGARGSEGPQGVRGEPGPPGPAGAAGANGAPGIAGAPGFPGARGPSGPQGPSGPSGPKGNSGEPGAPGSKGDTGAKGEPGPTGIQGPPGPAGEEGKRGARGEPGPAGIPGPPGERGGPGSRGFPGADGVAGPKGPAGERGSPGPAGPKGSPGEAGRPGEAGIPGAKGITGSPGSPGPDGKTGPPGPAGQDGRPGPPGPPGARGQAGVMGFPGPKGAAGEPGKAGERGVPGPPGAVGPAGKDGEAGAQGPPGPAGPAGERGEQGPAGSPGFQGIPGPAGPPGEAGKPGEQGVPGDIGAPGPSGARGERGFPGERGVQGPPGPAGPRGANGAPGNDGAKGDAGAPGAPGSQGAPGIQGMPGERGAAGIPGPKGDRGDAGPKGADGSPGKDGVRGITGPIGPPGPAGAPGDKGEAGPSGPAGPTGARGAPGDRGEPGPPGPAGFAGPPGADGQPGAKGEPGDAGAKGTGPPGPIGNVGAPGPKGARGSAGPPGATGFPGAAGRVGPPGPSGNAGPPGPPGPVGKRGETGPAGRPGEVGPPGPPGPAGEKGAPGADGPAGAPGTPGPQGIAGQRGVVGIPGQRGERGFPGIPGPSGEPGKQGPSGTSGERGPPGPMGPPGIAGPPGESGREGAPGAEGSPGRDGSPGAKGDRGETGPAGPPGAPGAPGAPGPVGPAGKSGDRGETGPAGPAGPIGPVGARGAAGPQGPRGDKGETGEQGDRGIKGHRGFSGIQGPPGPPGSPGEQGPSGASGPAGPRGPPGSAGSPGKDGINGIPGPIGPPGPRPGPPGPPGPPGPP.

The disordered stretch occupies residues Gly-1–Pro-957. Residues Phe-23–Met-33 are compositionally biased toward low complexity. Residues Asn-45 to Glu-59 are compositionally biased toward basic and acidic residues. Residue Ser-87 is modified to Phosphoserine. Composition is skewed to low complexity over residues Asp-95–Ile-113 and Pro-125–Ala-138. A compositionally biased stretch (pro residues) spans Pro-140 to Phe-152. Composition is skewed to low complexity over residues Ala-186 to Ser-210 and Ser-219 to Pro-228. Residues Gly-277 to Gly-286 are compositionally biased toward gly residues. Low complexity-rich tracts occupy residues Lys-330–Arg-356, Ala-365–Pro-384, Gln-426–Gln-453, Pro-488–Pro-516, Ala-576–Ala-590, Ala-603–Lys-618, Ser-649–Val-665, and Ala-707–Ala-731. Ser-579 is modified (phosphoserine). Pro residues-rich tracts occupy residues Pro-772 to Ala-782 and Ala-818 to Val-833. Residues Ile-854–Pro-868 are compositionally biased toward low complexity. The segment covering Arg-869–Ile-883 has biased composition (basic and acidic residues). Over residues Pro-902–Pro-935 the composition is skewed to low complexity. The span at Pro-937–Pro-957 shows a compositional bias: pro residues.

The protein belongs to the fibrillar collagen family. In terms of assembly, trimers of one alpha 2(I) and two alpha 1(I) chains. In terms of processing, prolines at the third position of the tripeptide repeating unit (G-X-Y) are hydroxylated in some or all of the chains. Forms the fibrils of tendon, ligaments and bones. In bones, the fibrils are mineralized with calcium hydroxyapatite.

The protein localises to the secreted. It is found in the extracellular space. The protein resides in the extracellular matrix. In terms of biological role, type I collagen is a member of group I collagen (fibrillar forming collagen). This is Collagen alpha-1(I) chain from Hippopotamus amphibius (Hippopotamus).